Here is a 1378-residue protein sequence, read N- to C-terminus: Tonsoku-like protein (1378 aa).

TPR repeat units follow at residues 27–60, 67–100, 107–147, 162–195, 202–235, 242–275, 311–344, and 352–385; these read AALC…RERA, AVAH…AHSL, QRAW…VDEE, TRLY…AEQN, FRAR…AHTM, SECC…GSQK, MVIC…AELL, and AIIH…RSGN. The tract at residues 475–524 is disordered; it reads AATAESEALEAGEVELSEGEDDTDGLTPQLEEDEELQGHLGRRKGSKWNR. The segment covering 481–509 has biased composition (acidic residues); it reads EALEAGEVELSEGEDDTDGLTPQLEEDEE. Basic residues predominate over residues 514–523; that stretch reads LGRRKGSKWN. ANK repeat units lie at residues 528-557, 561-590, and 597-626; these read MGET…PLNP, CGWT…AVDD, and EGIT…SVTL. Residues 667-789 are disordered; the sequence is AASGQDPHSS…REAATASTSR (123 aa). Positions 672–684 are enriched in polar residues; that stretch reads DPHSSQAFHTPSS. Over residues 691–702 the composition is skewed to pro residues; it reads TSPPLSPCPEPP. Ser-719 carries the phosphoserine modification. Composition is skewed to low complexity over residues 736-753 and 777-789; these read GPAS…AGPA and ASNR…STSR. Arg-797 is subject to Omega-N-methylarginine. Residues 842-933 form a disordered region; the sequence is LTRSRRPRPR…PLGPAPPPPI (92 aa). Polar residues-rich tracts occupy residues 883-899 and 907-918; these read CMQS…SSLA and STPRVSEPSGDS. LRR repeat units lie at residues 1069–1093, 1097–1122, 1128–1151, 1188–1212, 1247–1270, 1275–1300, and 1331–1354; these read HTAL…LVAA, MPSL…AMGL, LQSL…SLAS, AEHL…TLQS, GCAL…DLCR, CPSL…LLST, and AAQL…ALRQ.

The protein belongs to the Tonsoku family. Component of the MMS22L-TONSL complex, a complex at least composed of MMS22L and TONSL/NFKBIL2. Interacts with the MCM complex, the FACT complex and the RPA complex. Interacts with MCM5; the interaction is direct. Binds histones, with a strong preference for histone H3.1 (histones H3.1 and H3-4/H3.1t). Interacts (via ANK repeats) with histone H4; specifically binds histone H4 lacking methylation at 'Lys-20' (H4K20me0). May interact with DNAJC9; the interaction seems to be histone-dependent. Expressed in heart, skeletal muscle and tracheal epithelial cells.

The protein resides in the nucleus. The protein localises to the chromosome. It localises to the cytoplasm. In terms of biological role, component of the MMS22L-TONSL complex, a complex that promotes homologous recombination-mediated repair of double-strand breaks (DSBs) at stalled or collapsed replication forks. The MMS22L-TONSL complex is required to maintain genome integrity during DNA replication. It mediates the assembly of RAD51 filaments on single-stranded DNA (ssDNA): the MMS22L-TONSL complex is recruited to DSBs following histone replacement by histone chaperones and eviction of the replication protein A complex (RPA/RP-A) from DSBs. Following recruitment to DSBs, the TONSL-MMS22L complex promotes recruitment of RAD51 filaments and subsequent homologous recombination. Within the complex, TONSL acts as a histone reader, which recognizes and binds newly synthesized histones following their replacement by histone chaperones. Specifically binds histone H4 lacking methylation at 'Lys-20' (H4K20me0) and histone H3.1. This Homo sapiens (Human) protein is Tonsoku-like protein.